Consider the following 164-residue polypeptide: UPF0304 protein YPDSF_1971 (164 aa).

This sequence belongs to the UPF0304 family.

The protein is UPF0304 protein YPDSF_1971 of Yersinia pestis (strain Pestoides F).